The following is a 646-amino-acid chain: Leukotriene A-4 hydrolase homolog (646 aa).

A peptide is bound by residues 172–174 (QCQ) and 307–312 (PYGGME). His-336 serves as a coordination point for Zn(2+). The active-site Proton acceptor is Glu-337. Zn(2+)-binding residues include His-340 and Glu-359. Tyr-424 acts as the Proton donor in catalysis.

It belongs to the peptidase M1 family. Zn(2+) serves as cofactor.

The protein localises to the cytoplasm. It is found in the nucleus. It carries out the reaction leukotriene A4 + H2O = leukotriene B4. It functions in the pathway lipid metabolism; leukotriene B4 biosynthesis. Aminopeptidase that preferentially cleaves tripeptides. Also has low epoxide hydrolase activity (in vitro). Can hydrolyze an epoxide moiety of LTA(4) to form LTB(4) (in vitro). The sequence is that of Leukotriene A-4 hydrolase homolog from Botryotinia fuckeliana (strain B05.10) (Noble rot fungus).